We begin with the raw amino-acid sequence, 410 residues long: Interstrand DNA cross-link repair glycosylase (410 aa).

Residues glutamine 45–aspartate 47 carry the QXD; important for activity motif.

It belongs to the DNA glycosylase AlkZ-like family.

In terms of biological role, DNA glycosylase involved in the repair of interstrand DNA cross-links (ICLs), which are highly toxic DNA lesions that covalently tether the opposing strands of DNA, thereby inhibiting essential cellular processes such as DNA replication and transcription. Acts by unhooking both sides of the ICLs, forming abasic (AP) sites on both strands. Unhooks ICLs derived from various cross-linking agents, including azinomycin B (AZB) and mechlorethamine, also known as nitrogen mustard (NM), protecting cells from the toxicity of these cross-linking agents. In vitro, also acts on monoadducts and can catalyze the excision of N7-methylguanine (7mGua) from an oligonucleotide containing N7-methyldeoxyguanosine (d7mG). Shows no unhooking activity toward FaPy-ICLs. This is Interstrand DNA cross-link repair glycosylase (ycaQ) from Escherichia coli (strain K12).